A 345-amino-acid polypeptide reads, in one-letter code: Transcription initiation factor IIB (345 aa).

Residues I20–S53 form a TFIIB-type zinc finger. Positions 24, 27, 45, and 48 each coordinate Zn(2+). Basic and acidic residues predominate over residues T65–R78. The tract at residues T65 to S93 is disordered. 2 repeat units span residues L136 to N212 and F242 to E318.

It belongs to the TFIIB family. In terms of assembly, associates with TFIID-IIA (DA complex) to form TFIID-IIA-IIB (DAB-complex) which is then recognized by polymerase II.

Its subcellular location is the nucleus. General factor that plays a major role in the activation of eukaryotic genes transcribed by RNA polymerase II. The chain is Transcription initiation factor IIB (SUA7) from Saccharomyces cerevisiae (strain ATCC 204508 / S288c) (Baker's yeast).